The following is a 183-amino-acid chain: Phosphopantetheine adenylyltransferase (183 aa).

Threonine 13 provides a ligand contact to substrate. ATP is bound by residues 13–14 and histidine 21; that span reads TF. Lysine 45, leucine 81, and arginine 95 together coordinate substrate. Residues 96–98, glutamate 106, and 131–137 contribute to the ATP site; these read GLR and HQFISSR.

It belongs to the bacterial CoaD family. In terms of assembly, homohexamer. Mg(2+) serves as cofactor.

The protein localises to the cytoplasm. The enzyme catalyses (R)-4'-phosphopantetheine + ATP + H(+) = 3'-dephospho-CoA + diphosphate. It participates in cofactor biosynthesis; coenzyme A biosynthesis; CoA from (R)-pantothenate: step 4/5. In terms of biological role, reversibly transfers an adenylyl group from ATP to 4'-phosphopantetheine, yielding dephospho-CoA (dPCoA) and pyrophosphate. The polypeptide is Phosphopantetheine adenylyltransferase (Rhodospirillum centenum (strain ATCC 51521 / SW)).